Here is a 128-residue protein sequence, read N- to C-terminus: uncharacterized protein (128 aa).

This is an uncharacterized protein from Frog virus 3 (isolate Goorha) (FV-3).